The primary structure comprises 455 residues: Ribulose bisphosphate carboxylase large chain (455 aa).

K5 carries the post-translational modification N6,N6,N6-trimethyllysine. Positions 114 and 164 each coordinate substrate. Residue K166 is the Proton acceptor of the active site. K168 is a binding site for substrate. Mg(2+) is bound by residues K192, D194, and E195. At K192 the chain carries N6-carboxylysine. H285 acts as the Proton acceptor in catalysis. Substrate is bound by residues R286, H318, and S370.

It belongs to the RuBisCO large chain family. Type I subfamily. Heterohexadecamer of 8 large chains and 8 small chains; disulfide-linked. The disulfide link is formed within the large subunit homodimers. Mg(2+) serves as cofactor. Post-translationally, the disulfide bond which can form in the large chain dimeric partners within the hexadecamer appears to be associated with oxidative stress and protein turnover.

Its subcellular location is the plastid. It localises to the chloroplast. It catalyses the reaction 2 (2R)-3-phosphoglycerate + 2 H(+) = D-ribulose 1,5-bisphosphate + CO2 + H2O. It carries out the reaction D-ribulose 1,5-bisphosphate + O2 = 2-phosphoglycolate + (2R)-3-phosphoglycerate + 2 H(+). Functionally, ruBisCO catalyzes two reactions: the carboxylation of D-ribulose 1,5-bisphosphate, the primary event in carbon dioxide fixation, as well as the oxidative fragmentation of the pentose substrate in the photorespiration process. Both reactions occur simultaneously and in competition at the same active site. This is Ribulose bisphosphate carboxylase large chain from Lupinus latifolius (Broad-leaved lupine).